We begin with the raw amino-acid sequence, 189 residues long: UPF0149 protein VFMJ11_2207 (189 aa).

It belongs to the UPF0149 family.

In Aliivibrio fischeri (strain MJ11) (Vibrio fischeri), this protein is UPF0149 protein VFMJ11_2207.